Here is a 329-residue protein sequence, read N- to C-terminus: UDP-3-O-acylglucosamine N-acyltransferase (329 aa).

Catalysis depends on His-224, which acts as the Proton acceptor.

It belongs to the transferase hexapeptide repeat family. LpxD subfamily. Homotrimer.

The catalysed reaction is a UDP-3-O-[(3R)-3-hydroxyacyl]-alpha-D-glucosamine + a (3R)-hydroxyacyl-[ACP] = a UDP-2-N,3-O-bis[(3R)-3-hydroxyacyl]-alpha-D-glucosamine + holo-[ACP] + H(+). It participates in bacterial outer membrane biogenesis; LPS lipid A biosynthesis. Functionally, catalyzes the N-acylation of UDP-3-O-acylglucosamine using 3-hydroxyacyl-ACP as the acyl donor. Is involved in the biosynthesis of lipid A, a phosphorylated glycolipid that anchors the lipopolysaccharide to the outer membrane of the cell. This Albidiferax ferrireducens (strain ATCC BAA-621 / DSM 15236 / T118) (Rhodoferax ferrireducens) protein is UDP-3-O-acylglucosamine N-acyltransferase.